A 520-amino-acid chain; its full sequence is Glutamate--cysteine ligase (520 aa).

It belongs to the glutamate--cysteine ligase type 1 family. Type 1 subfamily.

It carries out the reaction L-cysteine + L-glutamate + ATP = gamma-L-glutamyl-L-cysteine + ADP + phosphate + H(+). The protein operates within sulfur metabolism; glutathione biosynthesis; glutathione from L-cysteine and L-glutamate: step 1/2. In Leptospira interrogans serogroup Icterohaemorrhagiae serovar Lai (strain 56601), this protein is Glutamate--cysteine ligase.